A 153-amino-acid polypeptide reads, in one-letter code: Ribonuclease H (153 aa).

One can recognise an RNase H type-1 domain in the interval 1 to 141; sequence MKHVHIFTDG…ADELARKGME (141 aa). Positions 9, 47, 69, and 133 each coordinate Mg(2+). The disordered stretch occupies residues 123 to 153; that stretch reads HAGHPENERADELARKGMEPFKKARRADAVK. Residues 125–153 are compositionally biased toward basic and acidic residues; that stretch reads GHPENERADELARKGMEPFKKARRADAVK.

Belongs to the RNase H family. In terms of assembly, monomer. Mg(2+) serves as cofactor.

The protein localises to the cytoplasm. It catalyses the reaction Endonucleolytic cleavage to 5'-phosphomonoester.. In terms of biological role, endonuclease that specifically degrades the RNA of RNA-DNA hybrids. This chain is Ribonuclease H, found in Rhizobium meliloti (strain 1021) (Ensifer meliloti).